The sequence spans 971 residues: Exportin-2 (971 aa).

Residue methionine 1 is modified to N-acetylmethionine. An Importin N-terminal domain is found at 29–102 (AEKFLESVEG…KANIVHLMLS (74 aa)). Residue serine 112 is modified to Phosphoserine. Lysine 574 and lysine 824 each carry N6-acetyllysine. Serine 931 is modified (phosphoserine).

Belongs to the XPO2/CSE1 family. In terms of assembly, found in a complex with CSE1L/XPO2, Ran and KPNA2. Binds with high affinity to importin-alpha only in the presence of RanGTP. The complex is dissociated by the combined action of RanBP1 and RanGAP1. Interacts with CFTR. As to expression, detected in brain, placenta, ovary, testis and trachea (at protein level). Widely expressed. Highly expressed in testis and in proliferating cells.

It localises to the cytoplasm. The protein localises to the nucleus. Its function is as follows. Export receptor for importin-alpha. Mediates importin-alpha re-export from the nucleus to the cytoplasm after import substrates (cargos) have been released into the nucleoplasm. In the nucleus binds cooperatively to importin-alpha and to the GTPase Ran in its active GTP-bound form. Docking of this trimeric complex to the nuclear pore complex (NPC) is mediated through binding to nucleoporins. Upon transit of a nuclear export complex into the cytoplasm, disassembling of the complex and hydrolysis of Ran-GTP to Ran-GDP (induced by RANBP1 and RANGAP1, respectively) cause release of the importin-alpha from the export receptor. CSE1L/XPO2 then return to the nuclear compartment and mediate another round of transport. The directionality of nuclear export is thought to be conferred by an asymmetric distribution of the GTP- and GDP-bound forms of Ran between the cytoplasm and nucleus. This chain is Exportin-2 (CSE1L), found in Homo sapiens (Human).